The primary structure comprises 357 residues: MESRDLNLRERQVLGIIIQAYVVSAAPVGSRYIARNCNLGLSDATIRNVMADLEDEGYISQPHTSAGRTPTDKGYRYYVDLIMKVRRVNDEEKKRIDADFGQLTTERRGSSSEVLLSAAKVLGSISRQLSVVLSPALSNAVFEKLDMVLLSSTRMMVILSIQSLIVKTIVMELDLAVSRQEVSGVVDLLNQRLSGLTLSEIRKTISMRLSDCLADASLINFVVRSAGQLFDETPIIERLYISGAGYIVDQPEFKQPEKVRDFITMIEDKFSVAKLVERNRIYSETVHPSRMEVSISIGKENRERKAEDLTIVSTPYYVGGMMGKLGILGPTRMDYGHAVSVLNYMADCLSATLSEVN.

It belongs to the HrcA family.

Functionally, negative regulator of class I heat shock genes (grpE-dnaK-dnaJ and groELS operons). Prevents heat-shock induction of these operons. The sequence is that of Heat-inducible transcription repressor HrcA from Chlorobium phaeobacteroides (strain DSM 266 / SMG 266 / 2430).